The sequence spans 176 residues: Protein KleF (176 aa).

This is Protein KleF (kleF) from Escherichia coli.